The chain runs to 346 residues: KH domain-containing, RNA-binding, signal transduction-associated protein 2 (346 aa).

The region spanning 65–131 (LIPVQQYPKF…AKYAHLSNDL (67 aa)) is the KH domain. Positions 175–291 (LSYLNGSDDP…SYESYDDNYS (117 aa)) are disordered. The segment covering 195 to 224 (LRLTSTASPRGRGSAAPPAPPGRGAAAPRG) has biased composition (low complexity). Over residues 268-287 (YGYDDGYDGEYDDQSYESYD) the composition is skewed to acidic residues.

It belongs to the KHDRBS family.

It is found in the nucleus. Its function is as follows. RNA-binding protein that plays a role in the regulation of alternative splicing. The protein is KH domain-containing, RNA-binding, signal transduction-associated protein 2 (khdrbs2) of Danio rerio (Zebrafish).